We begin with the raw amino-acid sequence, 706 residues long: D-(-)-3-hydroxybutyrate oligomer hydrolase (706 aa).

The signal sequence occupies residues 1–27 (MTIIIAGKNTLTLTSLAAAVLALGACG). Catalysis depends on serine 311, which acts as the Charge relay system.

It belongs to the D-(-)-3-hydroxybutyrate oligomer hydrolase family.

Its subcellular location is the secreted. The enzyme catalyses (3R)-hydroxybutanoate dimer + H2O = 2 (R)-3-hydroxybutanoate + H(+). It functions in the pathway lipid metabolism; butanoate metabolism. Functionally, participates in the degradation of poly-3-hydroxybutyrate (PHB). It works downstream of poly(3-hydroxybutyrate) depolymerase, hydrolyzing D(-)-3-hydroxybutyrate oligomers of various length (3HB-oligomers) into 3HB-monomers. The polypeptide is D-(-)-3-hydroxybutyrate oligomer hydrolase (Polaromonas naphthalenivorans (strain CJ2)).